A 127-amino-acid polypeptide reads, in one-letter code: Lymphocyte antigen 6D (127 aa).

The first 20 residues, 1–20, serve as a signal peptide directing secretion; the sequence is MKTALLVLLVLAVATSPAWA. One can recognise a UPAR/Ly6 domain in the interval 21–108; the sequence is LRCHVCTNSA…AAPGHALLSS (88 aa). Intrachain disulfides connect cysteine 23/cysteine 45, cysteine 26/cysteine 32, cysteine 38/cysteine 63, cysteine 67/cysteine 86, and cysteine 87/cysteine 92. Residue serine 98 is the site of GPI-anchor amidated serine attachment. Positions 99–127 are cleaved as a propeptide — removed in mature form; the sequence is AAPGHALLSSVTLGLATSLSLLTVMALCL.

In terms of tissue distribution, lymphoid cells lacking Ly6d, called ALP (all-lymphoid progenitor), retain full lymphoid potential and early thymic seeding activity, whereas cells containing Ly6d, called BLP (B-cell-biased lymphoid progenitor), up-regulate the B-cell specifying factors Ebf1 and Pax5 and behave essentially as B-cell progenitors (at protein level). Thymocytes and B-cells.

It localises to the cell membrane. May act as a specification marker at earliest stage specification of lymphocytes between B- and T-cell development. Marks the earliest stage of B-cell specification. In Mus musculus (Mouse), this protein is Lymphocyte antigen 6D (Ly6d).